The following is a 263-amino-acid chain: Rhomboid-like protease 3 (263 aa).

Transmembrane regions (helical) follow at residues 37 to 57, 86 to 106, 121 to 141, 142 to 162, 189 to 209, and 231 to 251; these read KSIV…CVLS, VVTP…LVFI, KFLV…MLMQ, PWAL…GMAA, LIYF…GGFL, and VLFY…PPLL. Ser-150 (nucleophile) is an active-site residue. His-204 is a catalytic residue.

The protein belongs to the peptidase S54 family.

Its subcellular location is the membrane. It catalyses the reaction Cleaves type-1 transmembrane domains using a catalytic dyad composed of serine and histidine that are contributed by different transmembrane domains.. Its function is as follows. Serine protease involved in intramembrane proteolysis and the subsequent release of polypeptides from their membrane anchors. This is Rhomboid-like protease 3 (ROM3) from Toxoplasma gondii.